Reading from the N-terminus, the 335-residue chain is Lipoyl synthase (335 aa).

Over residues 1 to 13 (MTIDTNPESSTPS) the composition is skewed to polar residues. The segment at 1–29 (MTIDTNPESSTPSAPAYNPSEKQKGSAKT) is disordered. Residues cysteine 75, cysteine 80, cysteine 86, cysteine 101, cysteine 105, cysteine 108, and serine 315 each coordinate [4Fe-4S] cluster. Positions 86 to 304 (CFGKGTATFM…EEEAYKMGFA (219 aa)) constitute a Radical SAM core domain.

Belongs to the radical SAM superfamily. Lipoyl synthase family. The cofactor is [4Fe-4S] cluster.

It localises to the cytoplasm. It catalyses the reaction [[Fe-S] cluster scaffold protein carrying a second [4Fe-4S](2+) cluster] + N(6)-octanoyl-L-lysyl-[protein] + 2 oxidized [2Fe-2S]-[ferredoxin] + 2 S-adenosyl-L-methionine + 4 H(+) = [[Fe-S] cluster scaffold protein] + N(6)-[(R)-dihydrolipoyl]-L-lysyl-[protein] + 4 Fe(3+) + 2 hydrogen sulfide + 2 5'-deoxyadenosine + 2 L-methionine + 2 reduced [2Fe-2S]-[ferredoxin]. The protein operates within protein modification; protein lipoylation via endogenous pathway; protein N(6)-(lipoyl)lysine from octanoyl-[acyl-carrier-protein]: step 2/2. Functionally, catalyzes the radical-mediated insertion of two sulfur atoms into the C-6 and C-8 positions of the octanoyl moiety bound to the lipoyl domains of lipoate-dependent enzymes, thereby converting the octanoylated domains into lipoylated derivatives. The protein is Lipoyl synthase of Herminiimonas arsenicoxydans.